Consider the following 394-residue polypeptide: S-adenosylmethionine synthase (394 aa).

His-18 contacts ATP. Asp-20 is a Mg(2+) binding site. Residue Glu-46 participates in K(+) binding. Glu-59 and Gln-102 together coordinate L-methionine. The tract at residues 102 to 112 (QSPDIDMGVSA) is flexible loop. ATP contacts are provided by residues 175–177 (DGK), Asp-250, 256–257 (RK), Ala-273, and Lys-277. L-methionine is bound at residue Asp-250. Residue Lys-281 coordinates L-methionine.

It belongs to the AdoMet synthase family. In terms of assembly, homotetramer; dimer of dimers. Mg(2+) is required as a cofactor. Requires K(+) as cofactor.

The protein localises to the cytoplasm. It carries out the reaction L-methionine + ATP + H2O = S-adenosyl-L-methionine + phosphate + diphosphate. It functions in the pathway amino-acid biosynthesis; S-adenosyl-L-methionine biosynthesis; S-adenosyl-L-methionine from L-methionine: step 1/1. Catalyzes the formation of S-adenosylmethionine (AdoMet) from methionine and ATP. The overall synthetic reaction is composed of two sequential steps, AdoMet formation and the subsequent tripolyphosphate hydrolysis which occurs prior to release of AdoMet from the enzyme. The sequence is that of S-adenosylmethionine synthase from Brachyspira hyodysenteriae (strain ATCC 49526 / WA1).